Reading from the N-terminus, the 237-residue chain is Ras-related protein Rab-23 (237 aa).

Residues Val-20, Gly-21, Lys-22, Ser-23, Ser-24, Tyr-38, and Thr-41 each coordinate GTP. Residue Ser-23 participates in Mg(2+) binding. The Switch 1 motif lies at Arg-28 to Phe-46. Positions 41 and 64 each coordinate Mg(2+). Positions Thr-65–Ala-84 match the Switch 2 motif. GTP-binding residues include Gly-67, Asn-121, Lys-122, Asp-124, Ser-151, Val-152, and Lys-153. Phosphoserine occurs at positions 186 and 187. Polar residues predominate over residues Ser-188–Thr-208. The tract at residues Ser-188 to Pro-237 is disordered. Residue Cys-234 is modified to Cysteine methyl ester. The S-geranylgeranyl cysteine moiety is linked to residue Cys-234. The propeptide at Ser-235 to Pro-237 is removed in mature form.

The protein belongs to the small GTPase superfamily. Rab family. Interacts with SUFU. Requires Mg(2+) as cofactor.

The protein resides in the cell membrane. It is found in the cytoplasm. The protein localises to the cytoplasmic vesicle. Its subcellular location is the autophagosome. It localises to the endosome membrane. The protein resides in the phagosome. It is found in the phagosome membrane. It catalyses the reaction GTP + H2O = GDP + phosphate + H(+). With respect to regulation, regulated by guanine nucleotide exchange factors (GEFs) which promote the exchange of bound GDP for free GTP. Regulated by GTPase activating proteins (GAPs) which increase the GTP hydrolysis activity. Inhibited by GDP dissociation inhibitors (GDIs). Functionally, the small GTPases Rab are key regulators of intracellular membrane trafficking, from the formation of transport vesicles to their fusion with membranes. Rabs cycle between an inactive GDP-bound form and an active GTP-bound form that is able to recruit to membranes different set of downstream effectors directly responsible for vesicle formation, movement, tethering and fusion. Together with SUFU, prevents nuclear import of GLI1, and thereby inhibits GLI1 transcription factor activity. Regulates GLI1 in differentiating chondrocytes. Likewise, regulates GLI3 proteolytic processing and modulates GLI2 and GLI3 transcription factor activity. Plays a role in autophagic vacuole assembly, and mediates defense against pathogens, such as S.aureus, by promoting their capture by autophagosomes that then merge with lysosomes. The chain is Ras-related protein Rab-23 from Homo sapiens (Human).